The following is a 197-amino-acid chain: Imidazoleglycerol-phosphate dehydratase (197 aa).

Belongs to the imidazoleglycerol-phosphate dehydratase family.

It is found in the cytoplasm. It carries out the reaction D-erythro-1-(imidazol-4-yl)glycerol 3-phosphate = 3-(imidazol-4-yl)-2-oxopropyl phosphate + H2O. Its pathway is amino-acid biosynthesis; L-histidine biosynthesis; L-histidine from 5-phospho-alpha-D-ribose 1-diphosphate: step 6/9. The sequence is that of Imidazoleglycerol-phosphate dehydratase from Saccharophagus degradans (strain 2-40 / ATCC 43961 / DSM 17024).